The chain runs to 252 residues: Small ribosomal subunit protein uS3 (252 aa).

Residues 39 to 110 (IRKALMKELK…EVKINVVEIK (72 aa)) form the KH type-2 domain. A disordered region spans residues 218 to 252 (TSDEKPKFEKRDFNRSNNNRRDQAPKSHPVAKEAK). Positions 219 to 252 (SDEKPKFEKRDFNRSNNNRRDQAPKSHPVAKEAK) are enriched in basic and acidic residues.

This sequence belongs to the universal ribosomal protein uS3 family. As to quaternary structure, part of the 30S ribosomal subunit. Forms a tight complex with proteins S10 and S14.

In terms of biological role, binds the lower part of the 30S subunit head. Binds mRNA in the 70S ribosome, positioning it for translation. This Spiroplasma citri protein is Small ribosomal subunit protein uS3.